Here is a 355-residue protein sequence, read N- to C-terminus: Inositol polyphosphate multikinase (355 aa).

Met-1 is subject to N-acetylmethionine. Lys-31 serves as a coordination point for ATP. Residue Ser-97 is modified to Phosphoserine. Residues 118–120 (ENL) and Asp-131 contribute to the ATP site. 127–135 (PNILDIKLG) serves as a coordination point for substrate. Ca(2+) is bound by residues Glu-271 and Asn-274. Residues 284-304 (FIDDDDDDDDNDDDDDDDAEG) show a composition bias toward acidic residues. The segment at 284 to 317 (FIDDDDDDDDNDDDDDDDAEGSSEGPKDKKTTGS) is disordered. Asp-325 serves as a coordination point for ATP. Gly-334 contributes to the Ca(2+) binding site.

It belongs to the inositol phosphokinase (IPK) family. As to quaternary structure, interacts with ARG80 and MCM1. Ca(2+) is required as a cofactor.

It localises to the nucleus. The catalysed reaction is 1D-myo-inositol 1,4,5-trisphosphate + 2 ATP = 1D-myo-inositol 1,3,4,5,6-pentakisphosphate + 2 ADP + 2 H(+). It carries out the reaction 1D-myo-inositol 1,4,5-trisphosphate + ATP = 1D-myo-inositol 1,4,5,6-tetrakisphosphate + ADP + H(+). It catalyses the reaction 1D-myo-inositol 1,4,5-trisphosphate + ATP = 1D-myo-inositol 1,3,4,5-tetrakisphosphate + ADP + H(+). The enzyme catalyses 1D-myo-inositol 1,4,5,6-tetrakisphosphate + ATP = 1D-myo-inositol 1,3,4,5,6-pentakisphosphate + ADP + H(+). The catalysed reaction is a 1,2-diacyl-sn-glycero-3-phospho-(1D-myo-inositol-4,5-bisphosphate) + ATP = a 1,2-diacyl-sn-glycero-3-phospho-(1D-myo-inositol-3,4,5-trisphosphate) + ADP + H(+). Functionally, inositol phosphate kinase with both monophosphoinositol and diphosphoinositol polyphosphate synthase activities. Able to phosphorylate inositol 1,4,5-trisphosphate (Ins(1,4,5)P3) on both the carbon-3 and carbon-6 positions to synthesize inositol 1,3,4,5-tetrakisphosphate (Ins(1,3,4,5)P4) and inositol 1,4,5,6-tetrakisphosphate (Ins(1,4,5,6)P4), and then to subsequently phosphorylate and convert either isomer of InsP4 to inositol 1,3,4,5,6-pentakisphosphate (Ins(1,3,4,5,6)P5). Its predominant in vivo catalytic function is to convert Ins(1,4,5)P3 to Ins(1,4,5,6)P4 to Ins(1,3,4,5,6)P5 via 6- and 3-kinase activities. It can also use Ins(1,3,4,5,6)P5 as a substrate and act as a diphosphoinositol polyphosphate synthase to generate two different isomers of PP-InsP4. Also has a role in transcription regulation. Forms a complex with ARG80, ARG81 and MCM1 (ArgR-MCM1), which coordinates the expression of arginine anabolic and catabolic genes in response to arginine. Recruits ARG80 and MCM21 to stabilize them. Neither the kinase activity nor inositol phosphates are required for the formation of ArgR-MCM1 transcriptional complexes on DNA promoter elements and the control of arginine metabolism. In contrast, only the catalytic activity is required for PHO gene repression by phosphate and for NCR gene activation in response to nitrogen availability, indicating a role for inositol pyrophosphates in these controls. Inositol polyphosphates may be involved in the regulation of chromatin remodeling of transcription. Regulates nuclear mRNA export via inositol phosphate metabolism. Also has lipid kinase activity, transforming the lipid inositol phosphatidylinositol 4,5-bisphosphate (PI(4,5)P2) into phosphatidylinositol 3,4,5-trisphosphate (PI(3,4,5)P3) in the nucleus. Its kinase activity is necessary for the propagation of most [PSI+] prion variants. This Saccharomyces cerevisiae (strain ATCC 204508 / S288c) (Baker's yeast) protein is Inositol polyphosphate multikinase (ARG82).